A 407-amino-acid chain; its full sequence is Carbamoyl phosphate synthase small chain (407 aa).

Positions 1 to 205 are CPSase; sequence MTETTPKTAP…LQDGYGEQDA (205 aa). The L-glutamine site is built by serine 60, glycine 257, and glycine 259. The 189-residue stretch at 209-397 folds into the Glutamine amidotransferase type-1 domain; it reads HVVALDFGVK…INLIRERKGQ (189 aa). Cysteine 286 serves as the catalytic Nucleophile. L-glutamine contacts are provided by leucine 287, glutamine 290, asparagine 328, glycine 330, and phenylalanine 331. Catalysis depends on residues histidine 370 and glutamate 372.

Belongs to the CarA family. In terms of assembly, composed of two chains; the small (or glutamine) chain promotes the hydrolysis of glutamine to ammonia, which is used by the large (or ammonia) chain to synthesize carbamoyl phosphate. Tetramer of heterodimers (alpha,beta)4.

It catalyses the reaction hydrogencarbonate + L-glutamine + 2 ATP + H2O = carbamoyl phosphate + L-glutamate + 2 ADP + phosphate + 2 H(+). It carries out the reaction L-glutamine + H2O = L-glutamate + NH4(+). It functions in the pathway amino-acid biosynthesis; L-arginine biosynthesis; carbamoyl phosphate from bicarbonate: step 1/1. The protein operates within pyrimidine metabolism; UMP biosynthesis via de novo pathway; (S)-dihydroorotate from bicarbonate: step 1/3. Small subunit of the glutamine-dependent carbamoyl phosphate synthetase (CPSase). CPSase catalyzes the formation of carbamoyl phosphate from the ammonia moiety of glutamine, carbonate, and phosphate donated by ATP, constituting the first step of 2 biosynthetic pathways, one leading to arginine and/or urea and the other to pyrimidine nucleotides. The small subunit (glutamine amidotransferase) binds and cleaves glutamine to supply the large subunit with the substrate ammonia. The chain is Carbamoyl phosphate synthase small chain from Brucella abortus (strain S19).